Consider the following 289-residue polypeptide: LBH domain-containing protein 1 (289 aa).

Disordered regions lie at residues 1 to 36 and 205 to 289; these read MALV…PLWD and EGAE…ASQD. The LBH domain occupies 1–128; that stretch reads MALVPGRSKE…AEAFFQDQSE (128 aa). The segment covering 15 to 25 has biased composition (polar residues); it reads TRNSPGSSQHP.

As to expression, expressed in bladder cancer tissues (at protein level).

The sequence is that of LBH domain-containing protein 1 from Homo sapiens (Human).